The sequence spans 314 residues: MEAILDKIFVEEAVSELHTLQDMIRWTVSRFNAANLFYGQGTDNAWDEAVQLILPTLYLPIDVPPHVLSSRLTSSERLRVVERVIKRINDRTPVAYLTNKAWFCGLEFFVDSRVLVPRSPIGELIQNRFEPWLTEEPTRIMDLCTGSGCIAIACANAFPEAEVDAIDISVDALNVAEQNIQDHGLEQQVFPIRSDLFRDLPQEQYDLIVTNPPYVDQEDMDSLPSEFRHEPELGLAAGSDGLKLARRILANAPLYLKENGILVCEVGNSMVHMMEQYPHIPFTWLEFENGGHGVFLLTREQLIDCAADFALYKD.

It belongs to the protein N5-glutamine methyltransferase family. PrmB subfamily.

The enzyme catalyses L-glutaminyl-[ribosomal protein uL3] + S-adenosyl-L-methionine = N(5)-methyl-L-glutaminyl-[ribosomal protein uL3] + S-adenosyl-L-homocysteine + H(+). Methylates large ribosomal subunit protein uL3 on a specific glutamine residue. The sequence is that of Ribosomal protein uL3 glutamine methyltransferase from Vibrio cholerae serotype O1 (strain ATCC 39315 / El Tor Inaba N16961).